Consider the following 135-residue polypeptide: Interleukin-4 (135 aa).

The N-terminal stretch at 1 to 24 (MGLTSQLIPALVCLLVCTSHFVHG) is a signal peptide. 3 disulfides stabilise this stretch: cysteine 27-cysteine 135, cysteine 48-cysteine 85, and cysteine 70-cysteine 105. Residues asparagine 62 and asparagine 96 are each glycosylated (N-linked (GlcNAc...) asparagine).

It belongs to the IL-4/IL-13 family.

It is found in the secreted. Its function is as follows. Participates in at least several B-cell activation processes as well as of other cell types. It is a costimulator of DNA-synthesis. It induces the expression of class II MHC molecules on resting B-cells. It enhances both secretion and cell surface expression of IgE and IgG1. It also regulates the expression of the low affinity Fc receptor for IgE (CD23) on both lymphocytes and monocytes. Positively regulates IL31RA expression in macrophages. Stimulates autophagy in dendritic cells by interfering with mTORC1 signaling and through the induction of RUFY4. This chain is Interleukin-4 (IL4), found in Capra hircus (Goat).